A 275-amino-acid chain; its full sequence is Rhamnulose-1-phosphate aldolase (275 aa).

Glutamate 117 is a catalytic residue. Positions 141, 143, and 212 each coordinate Zn(2+).

Belongs to the aldolase class II family. RhaD subfamily. Homotetramer. Zn(2+) is required as a cofactor.

The protein localises to the cytoplasm. The enzyme catalyses L-rhamnulose 1-phosphate = (S)-lactaldehyde + dihydroxyacetone phosphate. The protein operates within carbohydrate degradation; L-rhamnose degradation; glycerone phosphate from L-rhamnose: step 3/3. Functionally, catalyzes the reversible cleavage of L-rhamnulose-1-phosphate to dihydroxyacetone phosphate (DHAP) and L-lactaldehyde. The chain is Rhamnulose-1-phosphate aldolase from Salmonella paratyphi B (strain ATCC BAA-1250 / SPB7).